The primary structure comprises 142 residues: Phosphoribosyl-AMP cyclohydrolase (142 aa).

Mg(2+) is bound at residue D92. C93 is a Zn(2+) binding site. Positions 94 and 96 each coordinate Mg(2+). C109 and C116 together coordinate Zn(2+).

Belongs to the PRA-CH family. Homodimer. Mg(2+) serves as cofactor. It depends on Zn(2+) as a cofactor.

The protein localises to the cytoplasm. It catalyses the reaction 1-(5-phospho-beta-D-ribosyl)-5'-AMP + H2O = 1-(5-phospho-beta-D-ribosyl)-5-[(5-phospho-beta-D-ribosylamino)methylideneamino]imidazole-4-carboxamide. It participates in amino-acid biosynthesis; L-histidine biosynthesis; L-histidine from 5-phospho-alpha-D-ribose 1-diphosphate: step 3/9. Its function is as follows. Catalyzes the hydrolysis of the adenine ring of phosphoribosyl-AMP. In Halorhodospira halophila (strain DSM 244 / SL1) (Ectothiorhodospira halophila (strain DSM 244 / SL1)), this protein is Phosphoribosyl-AMP cyclohydrolase.